We begin with the raw amino-acid sequence, 70 residues long: Putative membrane protein insertion efficiency factor (70 aa).

It belongs to the UPF0161 family.

The protein resides in the cell inner membrane. Could be involved in insertion of integral membrane proteins into the membrane. This chain is Putative membrane protein insertion efficiency factor, found in Rhizorhabdus wittichii (strain DSM 6014 / CCUG 31198 / JCM 15750 / NBRC 105917 / EY 4224 / RW1) (Sphingomonas wittichii).